Reading from the N-terminus, the 917-residue chain is Probable dipeptidyl-aminopeptidase B (917 aa).

The tract at residues 1–78 (MGVEKRINDE…EGDLEEGFVP (78 aa)) is disordered. The Cytoplasmic portion of the chain corresponds to 1–90 (MGVEKRINDE…GGWSAPRKVS (90 aa)). The segment covering 16–26 (AERDDKSRDSI) has biased composition (basic and acidic residues). A compositionally biased stretch (low complexity) spans 27 to 49 (DSTSTASISLALLGGANGSAHGS). A compositionally biased stretch (basic and acidic residues) spans 55-65 (RKSENQEKYHD). A helical; Signal-anchor for type II membrane protein transmembrane segment spans residues 91-111 (VIFTLIVTLCIAGWLVAFFVL). Residues 112-917 (LGRHKDSSKD…LGLINILRNG (806 aa)) are Vacuolar-facing. N-linked (GlcNAc...) asparagine glycosylation is found at Asn350 and Asn465. The active-site Charge relay system is the Ser754. N-linked (GlcNAc...) asparagine glycosylation occurs at Asn813. Residues Asp831 and His864 each act as charge relay system in the active site.

The protein belongs to the peptidase S9B family.

The protein localises to the vacuole membrane. The catalysed reaction is Release of an N-terminal dipeptide, Xaa-Yaa-|-Zaa-, from a polypeptide, preferentially when Yaa is Pro, provided Zaa is neither Pro nor hydroxyproline.. Its function is as follows. Type IV dipeptidyl-peptidase which removes N-terminal dipeptides sequentially from polypeptides having unsubstituted N-termini provided that the penultimate residue is proline. This is Probable dipeptidyl-aminopeptidase B (DAPB) from Coccidioides posadasii (strain C735) (Valley fever fungus).